A 284-amino-acid polypeptide reads, in one-letter code: ATP synthase gamma chain (284 aa).

This sequence belongs to the ATPase gamma chain family. In terms of assembly, F-type ATPases have 2 components, CF(1) - the catalytic core - and CF(0) - the membrane proton channel. CF(1) has five subunits: alpha(3), beta(3), gamma(1), delta(1), epsilon(1). CF(0) has three main subunits: a, b and c.

It is found in the cell membrane. Produces ATP from ADP in the presence of a proton gradient across the membrane. The gamma chain is believed to be important in regulating ATPase activity and the flow of protons through the CF(0) complex. This Pelotomaculum thermopropionicum (strain DSM 13744 / JCM 10971 / SI) protein is ATP synthase gamma chain.